The following is a 946-amino-acid chain: Leucine--tRNA ligase (946 aa).

The 'HIGH' region signature appears at P40 to H51. The 'KMSKS' region motif lies at K719–S723. K722 contacts ATP.

The protein belongs to the class-I aminoacyl-tRNA synthetase family.

Its subcellular location is the cytoplasm. It carries out the reaction tRNA(Leu) + L-leucine + ATP = L-leucyl-tRNA(Leu) + AMP + diphosphate. The protein is Leucine--tRNA ligase of Parabacteroides distasonis (strain ATCC 8503 / DSM 20701 / CIP 104284 / JCM 5825 / NCTC 11152).